A 272-amino-acid polypeptide reads, in one-letter code: Small ribosomal subunit protein uS2 (272 aa).

The disordered stretch occupies residues 238 to 272 (ASKEEQTEEAEEETLSSKYREQDFQEAKSGARGEK). Positions 255–272 (KYREQDFQEAKSGARGEK) are enriched in basic and acidic residues.

The protein belongs to the universal ribosomal protein uS2 family.

The polypeptide is Small ribosomal subunit protein uS2 (Protochlamydia amoebophila (strain UWE25)).